Reading from the N-terminus, the 2460-residue chain is Reducing polyketide synthase BOA6 (2460 aa).

Residues 5-438 form the Ketosynthase family 3 (KS3) domain; that stretch reads NEPIAVIGTG…GTNAHAILES (434 aa). Catalysis depends on for beta-ketoacyl synthase activity residues Cys178, His317, and His360. Residues 549-864 form a malonyl-CoA:ACP transacylase (MAT) domain region; sequence VFTGQGAQWP…PYTGVLSRGD (316 aa). The segment at 938–1073 is N-terminal hotdog fold; sequence HELLGVRCAD…GRIKMTLGTP (136 aa). Residues 938-1244 form a dehydratase (DH) domain region; that stretch reads HELLGVRCAD…QMQSFTAARP (307 aa). One can recognise a PKS/mFAS DH domain in the interval 938 to 1245; the sequence is HELLGVRCAD…MQSFTAARPS (308 aa). His970 serves as the catalytic Proton acceptor; for dehydratase activity. Residues 1088 to 1245 form a C-terminal hotdog fold region; that stretch reads LGPLNVDRFY…MQSFTAARPS (158 aa). The active-site Proton donor; for dehydratase activity is the Asp1145. A methyltransferase (MT) domain region spans residues 1399–1586; sequence NKFVTAAMKK…VNDFKDKSRY (188 aa). Positions 2098 to 2266 are ketoreductase (KR) domain; that stretch reads SYLLAGLTGD…KRGGVASVIH (169 aa). The 79-residue stretch at 2378-2456 folds into the Carrier domain; the sequence is DEVLGVMQKC…DLCELACEEY (79 aa). Ser2416 is modified (O-(pantetheine 4'-phosphoryl)serine).

Its pathway is polyketide biosynthesis. Its function is as follows. Reducing polyketide synthase; part of the gene cluster A that mediates the biosynthesis of botcinic acid and its botcinin derivatives, acetate-derived polyketides that contribute to virulence when combined with the sesquiterpene botrydial. Botcinic acid and its derivatives have been shown to induce chlorosis and necrosis during host plant infection, but also have antifungal activities. Two polyketide synthases, BOA6 and BOA9, are involved in the biosynthesis of botcinins. BOA6 mediates the formation of the per-methylated tetraketide core by condensation of four units of malonyl-CoA with one unit of acetyl-CoA, which would be methylated in activated methylene groups to yield a bicyclic acid intermediate that could then either be converted to botrylactone derivatives or lose the starter acetate unit through a retro-Claisen type C-C bond cleavage to yield botcinin derivatives. The second polyketide synthase, BOA9, is probably required for the biosynthesis of the tetraketide side chain of botcinins. The methyltransferase (MT) domain within BOA6 is probably responsible for the incorporation of four methyl groups. The trans-enoyl reductase BOA5 might take over the enoyl reductase function of BOA6 that misses an ER domain. The monooxygenases BOA2, BOA3 and BOA4 might be involved in further hydroxylations at C4, C5 and C8, whereas BOA7, close to BOA9, could potentially be involved in the hydroxylation at C4 in the side chain of botcinins. The polypeptide is Reducing polyketide synthase BOA6 (Botryotinia fuckeliana (strain B05.10) (Noble rot fungus)).